The sequence spans 101 residues: Urease subunit beta (101 aa).

The protein belongs to the urease beta subunit family. Heterotrimer of UreA (gamma), UreB (beta) and UreC (alpha) subunits. Three heterotrimers associate to form the active enzyme.

Its subcellular location is the cytoplasm. The enzyme catalyses urea + 2 H2O + H(+) = hydrogencarbonate + 2 NH4(+). It participates in nitrogen metabolism; urea degradation; CO(2) and NH(3) from urea (urease route): step 1/1. The sequence is that of Urease subunit beta from Azotobacter vinelandii (strain DJ / ATCC BAA-1303).